A 513-amino-acid chain; its full sequence is Membrane-bound transcription factor site-2 protease homolog (513 aa).

Residues 1 to 60 (MEISGRRMRRFRMRFRRDHLTGGENIENEASCCYCDLKISNFNEPIFRLGRRFSGVLKVW) lie on the Cytoplasmic side of the membrane. A helical membrane pass occupies residues 61–81 (FSIGLGFGVASLILVTVFLLL). The Lumenal segment spans residues 82 to 107 (QFHSNPLFSNRLTSAVFGFSPSTRVS). Residues 108 to 128 (LSGIAYVLVSTVITVSVHELG) traverse the membrane as a helical segment. H125 is a Zn(2+) binding site. Residue E126 is part of the active site. Residue H129 coordinates Zn(2+). Topologically, residues 129–137 (HALAAASEG) are cytoplasmic. Residues 138–158 (IQMEYIAVFIAAIFPGGLVAF) traverse the membrane as a helical segment. Residues 159 to 182 (DNDVLQSLPSFNALRIYCAGIWHN) lie on the Lumenal side of the membrane. A helical membrane pass occupies residues 183–203 (AVFCALCVFALFLLPVMLSPF). Residues 204–437 (YKHGESLTVV…KSFPNILERS (234 aa)) are Cytoplasmic-facing. The helical transmembrane segment at 438–458 (LTCTFHVSLALVLLNSLPVYY) threads the bilayer. Over 459–485 (LDGESILESSLQSFTWLSPRKKKKALQ) the chain is Lumenal. The helical transmembrane segment at 486 to 506 (VCLVGGSLLSFLAFFRIFLLG) threads the bilayer. Residues 507-513 (LPLSRRW) are Cytoplasmic-facing.

Belongs to the peptidase M50A family. It depends on Zn(2+) as a cofactor. In terms of tissue distribution, expressed in the vasculature of roots, cotyledons and leaves.

It is found in the golgi apparatus membrane. Its function is as follows. Metalloprotease that catalyzes the second step (site-2 cleavage) in the proteolytic activation of various factors, after site-1 cleavage. Part of a regulated intramembrane proteolysis (RIP) cascade. After ER stress, cleaves BZIP17 and BZIP28 proteins which function as stress sensors and transducers in ER stress signaling pathway. The N-terminal bZIP component is translocated to the nucleus, where it activates the expression and production of ER chaperones, as well as proteins involved in brassinosteroid (BR) signaling, which is required for stress acclimation and growth. The polypeptide is Membrane-bound transcription factor site-2 protease homolog (S2P) (Arabidopsis thaliana (Mouse-ear cress)).